The chain runs to 257 residues: Imidazole glycerol phosphate synthase subunit HisF (257 aa).

Active-site residues include Asp-12 and Asp-131.

This sequence belongs to the HisA/HisF family. Heterodimer of HisH and HisF.

It is found in the cytoplasm. The catalysed reaction is 5-[(5-phospho-1-deoxy-D-ribulos-1-ylimino)methylamino]-1-(5-phospho-beta-D-ribosyl)imidazole-4-carboxamide + L-glutamine = D-erythro-1-(imidazol-4-yl)glycerol 3-phosphate + 5-amino-1-(5-phospho-beta-D-ribosyl)imidazole-4-carboxamide + L-glutamate + H(+). It functions in the pathway amino-acid biosynthesis; L-histidine biosynthesis; L-histidine from 5-phospho-alpha-D-ribose 1-diphosphate: step 5/9. IGPS catalyzes the conversion of PRFAR and glutamine to IGP, AICAR and glutamate. The HisF subunit catalyzes the cyclization activity that produces IGP and AICAR from PRFAR using the ammonia provided by the HisH subunit. The sequence is that of Imidazole glycerol phosphate synthase subunit HisF from Kineococcus radiotolerans (strain ATCC BAA-149 / DSM 14245 / SRS30216).